The primary structure comprises 319 residues: Probable metallo-hydrolase YqjP (319 aa).

Residues histidine 67, histidine 69, aspartate 71, histidine 72, histidine 165, aspartate 184, and histidine 231 each contribute to the Zn(2+) site.

The protein belongs to the metallo-beta-lactamase superfamily. Requires Zn(2+) as cofactor.

The sequence is that of Probable metallo-hydrolase YqjP (yqjP) from Bacillus subtilis (strain 168).